A 646-amino-acid polypeptide reads, in one-letter code: Lipoteichoic acid synthase (646 aa).

Residues 1 to 7 (MKLHKKK) lie on the Cytoplasmic side of the membrane. A helical membrane pass occupies residues 8–28 (LTLFAFFILTVLTVTLKTYFS). Topologically, residues 29–43 (YYVDFSLGVKGLVQN) are extracellular. A helical membrane pass occupies residues 44–64 (LILLMNPYSLIALVLSIFLFF). At 65-68 (KGKK) the chain is on the cytoplasmic side. The chain crosses the membrane as a helical span at residues 69 to 89 (AFWFIFIGGFILTFLLYANVV). Residues 90-119 (YFRFFSDFLTFSTLNQAGNVESMGGAVTAS) lie on the Extracellular side of the membrane. The helical transmembrane segment at 120–140 (FKWYDFVYFIDTIIYLFVLIF) threads the bilayer. Residues 141 to 153 (KQKWLDKRVFSKK) lie on the Cytoplasmic side of the membrane. The chain crosses the membrane as a helical span at residues 154–174 (FVPVVMAASIALFFLNLAFAE). The Extracellular segment spans residues 175–646 (SDRPELLTRT…KTGPKGQERK (472 aa)). The Mn(2+) site is built by Glu-255 and Thr-300. Thr-300 is a catalytic residue. Position 416 (His-416) interacts with substrate. Residues Asp-475 and His-476 each contribute to the Mn(2+) site. Positions 579–646 (IYDNKNNEPM…KTGPKGQERK (68 aa)) are disordered. Composition is skewed to basic and acidic residues over residues 580–607 (YDNK…KDLQ) and 625–646 (DFDK…QERK).

This sequence belongs to the LTA synthase family. In terms of processing, proteolytically cleaved.

The protein resides in the cell membrane. It localises to the secreted. It functions in the pathway cell wall biogenesis; lipoteichoic acid biosynthesis. Functionally, catalyzes the polymerization of lipoteichoic acid (LTA) polyglycerol phosphate, a reaction that presumably uses phosphatidylglycerol (PG) as substrate. Is required for staphylococcal growth and cell division process. In Staphylococcus saprophyticus subsp. saprophyticus (strain ATCC 15305 / DSM 20229 / NCIMB 8711 / NCTC 7292 / S-41), this protein is Lipoteichoic acid synthase (ltaS).